The sequence spans 418 residues: AP-3 complex subunit mu-1 (418 aa).

In terms of domain architecture, MHD spans 176 to 417 (NNEAYFDVVE…ITKAGKFQVR (242 aa)).

It belongs to the adaptor complexes medium subunit family. Adaptor protein complex 3 (AP-3) is a heterotetramer composed of two large adaptins (delta-type subunit AP3D1 and beta-type subunit AP3B1 or AP3B2), a medium adaptin (mu-type subunit AP3M1 or AP3M2) and a small adaptin (sigma-type subunit APS1 or AP3S2). Interacts with AGAP1. AP-3 associates with the BLOC-1 complex.

Its subcellular location is the golgi apparatus. It localises to the cytoplasmic vesicle membrane. Part of the AP-3 complex, an adaptor-related complex which is not clathrin-associated. The complex is associated with the Golgi region as well as more peripheral structures. It facilitates the budding of vesicles from the Golgi membrane and may be directly involved in trafficking to lysosomes. In concert with the BLOC-1 complex, AP-3 is required to target cargos into vesicles assembled at cell bodies for delivery into neurites and nerve terminals. This Rattus norvegicus (Rat) protein is AP-3 complex subunit mu-1 (Ap3m1).